Here is a 187-residue protein sequence, read N- to C-terminus: Threonylcarbamoyl-AMP synthase (187 aa).

The YrdC-like domain maps to 3-187; that stretch reads QVLPADAAEL…ARSGTVIREG (185 aa).

It belongs to the SUA5 family. TsaC subfamily.

The protein localises to the cytoplasm. It catalyses the reaction L-threonine + hydrogencarbonate + ATP = L-threonylcarbamoyladenylate + diphosphate + H2O. Its function is as follows. Required for the formation of a threonylcarbamoyl group on adenosine at position 37 (t(6)A37) in tRNAs that read codons beginning with adenine. Catalyzes the conversion of L-threonine, HCO(3)(-)/CO(2) and ATP to give threonylcarbamoyl-AMP (TC-AMP) as the acyladenylate intermediate, with the release of diphosphate. This is Threonylcarbamoyl-AMP synthase from Shewanella pealeana (strain ATCC 700345 / ANG-SQ1).